Here is a 435-residue protein sequence, read N- to C-terminus: Membrane-bound ghrelin O-acyltransferase MBOAT4 (435 aa).

Residues 1-5 (MDWLQ) are Lumenal-facing. Residues 6-26 (LFFLHPLSFYQGAAFPFALLF) form a helical membrane-spanning segment. Topologically, residues 27-40 (NYLCILDTFSTRAR) are cytoplasmic. The helical transmembrane segment at 41–56 (YLFLLAGGGVLAFAAM) threads the bilayer. Residues 57–59 (GPY) are Lumenal-facing. A helical transmembrane segment spans residues 60–76 (SLLIFIPALCAVALVSF). At 77-82 (LSPQEV) the chain is on the cytoplasmic side. The helical transmembrane segment at 83–101 (HRLTFFFQMGWQTLCHLGL) threads the bilayer. Over 102–120 (HYTEYYLGEPPPVRFYITL) the chain is Lumenal. Residues 121–136 (SSLMLLTQRVTSLSLD) form a helical membrane-spanning segment. The Cytoplasmic portion of the chain corresponds to 137 to 206 (ICEGKVEAPR…YPSISFRALT (70 aa)). The chain crosses the membrane as a helical span at residues 207–227 (WRGLQILGLECLKVALRSAVS). At 228–240 (AGAGLDDCQRLEC) the chain is on the lumenal side. Residues 241–261 (IYLMWSTAWLFKLTYYSHWIL) form a helical membrane-spanning segment. Residues 262 to 324 (DDSLLHAAGF…RRLVFRKSRR (63 aa)) lie on the Cytoplasmic side of the membrane. Active-site residues include Asn-307 and His-338. A helical transmembrane segment spans residues 325 to 338 (WPLLQTFAFSAWWH). Residues 339–340 (GL) lie on the Lumenal side of the membrane. Residues 341–357 (HPGQVFGFLCWSVMVKA) form a helical membrane-spanning segment. Residues 358-376 (DYLIHTFANVCIRSWPLRL) are Cytoplasmic-facing. A helical membrane pass occupies residues 377–397 (LYRALTWAHTQLIIAYIMLAV). Residues 398–407 (EGRSLSSLCQ) lie on the Lumenal side of the membrane. A helical transmembrane segment spans residues 408–428 (LCCSYNSLFPVMYGLLLFLLA). At 429–435 (ERKDKRN) the chain is on the cytoplasmic side.

It belongs to the membrane-bound acyltransferase family. In terms of assembly, monomer. Post-translationally, not glycosylated. In terms of tissue distribution, highly expressed in stomach and pancreas. Lower expression in small intestine and colon. Very low expression in testis.

The protein localises to the endoplasmic reticulum membrane. It catalyses the reaction octanoyl-CoA + L-seryl-[protein] = O-octanoyl-L-seryl-[protein] + CoA. The catalysed reaction is hexanoyl-CoA + L-seryl-[protein] = O-hexanoyl-L-seryl-[protein] + CoA. The enzyme catalyses decanoyl-CoA + L-seryl-[protein] = O-decanoyl-L-seryl-[protein] + CoA. It carries out the reaction L-seryl-[protein] + acetyl-CoA = O-acetyl-L-seryl-[protein] + CoA. It catalyses the reaction L-seryl-[protein] + butanoyl-CoA = O-butanoyl-L-seryl-[protein] + CoA. The catalysed reaction is pentanoyl-CoA + L-seryl-[protein] = O-pentanoyl-L-seryl-[protein] + CoA. The enzyme catalyses heptanoyl-CoA + L-seryl-[protein] = O-heptanoyl-L-seryl-[protein] + CoA. It carries out the reaction nonanoyl-CoA + L-seryl-[protein] = O-nonanoyl-L-seryl-[protein] + CoA. It catalyses the reaction L-seryl-[protein] + dodecanoyl-CoA = O-dodecanoyl-L-seryl-[protein] + CoA. The catalysed reaction is L-seryl-[protein] + tetradecanoyl-CoA = O-tetradecanoyl-L-seryl-[protein] + CoA. The enzyme catalyses a fatty acyl-CoA + L-seryl-[protein] = O-fatty acyl-L-seryl-[protein] + CoA. Inhibited by 1-[2-cyano-3,12-dioxooleana-1,9(11)- dien-28-oyl]ethylamide (CDDO-EA) with an IC(50) of 60 uM. Inhibited by Fe3+ and Cu2+ and the O-acyltransferase activity is completely blocked over 5 mM Fe3+ and 0.5 mM Cu2+. Its function is as follows. Catalyzes ghrelin acylation at 'Ser-3' using preferentially octanoyl-CoA, hexanoyl-CoA and decanoyl-CoA as acyl-CoA donors leading to ghrelin activity. In vitro also uses acyl-CoA donors of different lengths from short-chain (C2) to long-chain fatty acids (C16) knowing that acyl-CoA donors from butanoyl-CoA (C4) to dodecanoyl-CoA (C12) are more efficient compared to longer acyl-CoA donors, such as myristoyl-CoA (C14) and palmitoyl-CoA (C16) that are not efficient. Inactive octanoyltransferase activity. The polypeptide is Membrane-bound ghrelin O-acyltransferase MBOAT4 (Mus musculus (Mouse)).